The primary structure comprises 182 residues: Ribosome maturation factor RimM (182 aa).

The PRC barrel domain maps to 106 to 179 (EGEFHVLDLI…RIEITPPPGL (74 aa)).

This sequence belongs to the RimM family. Binds ribosomal protein uS19.

It localises to the cytoplasm. Functionally, an accessory protein needed during the final step in the assembly of 30S ribosomal subunit, possibly for assembly of the head region. Essential for efficient processing of 16S rRNA. May be needed both before and after RbfA during the maturation of 16S rRNA. It has affinity for free ribosomal 30S subunits but not for 70S ribosomes. This is Ribosome maturation factor RimM from Synechococcus elongatus (strain ATCC 33912 / PCC 7942 / FACHB-805) (Anacystis nidulans R2).